Here is a 339-residue protein sequence, read N- to C-terminus: tRNA dimethylallyltransferase (339 aa).

36–43 provides a ligand contact to ATP; that stretch reads GPTGSGKT. 38–43 contributes to the substrate binding site; the sequence is TGSGKT. Residues 61–64 are interaction with substrate tRNA; that stretch reads DSMQ.

Belongs to the IPP transferase family. In terms of assembly, monomer. It depends on Mg(2+) as a cofactor.

It carries out the reaction adenosine(37) in tRNA + dimethylallyl diphosphate = N(6)-dimethylallyladenosine(37) in tRNA + diphosphate. Catalyzes the transfer of a dimethylallyl group onto the adenine at position 37 in tRNAs that read codons beginning with uridine, leading to the formation of N6-(dimethylallyl)adenosine (i(6)A). This chain is tRNA dimethylallyltransferase, found in Chlamydia trachomatis serovar A (strain ATCC VR-571B / DSM 19440 / HAR-13).